We begin with the raw amino-acid sequence, 1311 residues long: Protein PARALOG OF AIPP2 (1311 aa).

Disordered regions lie at residues 1-21 (MADR…KVES), 114-141 (ISDD…VSAS), and 178-280 (GNKD…EMVE). A compositionally biased stretch (basic and acidic residues) spans 213–240 (NHDDRVSSEKGNFKEKSRPGGNKERQEP). A compositionally biased stretch (low complexity) spans 258–270 (SKSSSSNSSAVSE). The PHD-type zinc finger occupies 283–334 (VKVCDICGDAGREDLLAICSGCSDGAEHTYCMREMLDEVPEGDWLCEECAEE). Positions 286, 289, 301, 304, 310, 313, 328, and 331 each coordinate Zn(2+). Residues 328–348 (CEECAEEAEKQKQEAKRKRET) adopt a coiled-coil conformation. Disordered regions lie at residues 369-390 (PDAK…ILPR), 411-440 (NHQT…FLKS), 460-701 (HPRQ…EDLN), 975-1050 (TNPQ…PSKK), 1059-1078 (EAGV…GDSL), 1087-1138 (EQEL…NPAN), 1152-1186 (NDGL…GIMK), and 1249-1311 (LSRS…DLPR). Positions 411-431 (NHQTSFSDDTESARSAGSQLQ) are enriched in polar residues. A compositionally biased stretch (basic and acidic residues) spans 460–472 (HPRQKTGKEDTAL). A compositionally biased stretch (polar residues) spans 487 to 502 (PSRTTDAGNSGGSDSQ). The span at 512–528 (HSQEGKSLKQVKDRNRE) shows a compositional bias: basic and acidic residues. The segment covering 529-552 (ANASASSIDQKLKSRGNSSVSHAN) has biased composition (polar residues). The segment covering 553 to 566 (NNRDLKGLQSDGKR) has biased composition (basic and acidic residues). Positions 569-607 (LTKQVSNLSRNRLENSVVSGGDISTNEKCSASEQSSSQA) are enriched in polar residues. Basic and acidic residues predominate over residues 640-653 (VPREVGKKSKEAFS). 3 stretches are compositionally biased toward polar residues: residues 668-694 (PSSQ…STTK), 977-988 (PQKNTSLPTSNV), and 1014-1025 (LRESSSNGIETR). Positions 1026–1050 (NGTDARSHENPNNRESSIERSPSKK) are enriched in basic and acidic residues. Residues 1087-1096 (EQELGGRKDL) are compositionally biased toward basic and acidic residues. The segment covering 1250-1263 (SRSSNSGEQSNNSM) has biased composition (polar residues). A coiled-coil region spans residues 1256–1276 (GEQSNNSMNKEKQKADEEEED). Positions 1280 to 1289 (VAASLSLSLS) are enriched in low complexity.

In terms of assembly, part of the BAH-PHD bivalent histone reader complex that contains AIPP2, PAIPP2 and AIPP3/BDT1; the BAH-PHD module associates with CPL2 to form the BAH-PHD-CPL2 complex (BPC) for transcriptional repression. Binds directly to AIPP3/BDT1 and CPL2, but not to AIPP2. Expressed ubiquitously.

Functionally, together with AIPP2 and AIPP3/BDT1, cooperates to form a BAH-PHD bivalent histone reader complex able to read histone H3 lysine 27 trimethylation (H3K27me3) and low-methylated H3K4 histone marks in order to regulate transcription, especially to prevent early flowering; promotes AIPP3/BDT1 binding to H3K27me3. CPL2 is subsequently recruited to form a BAH-PHD-CPL2 complex (BPC) in order to silence several H3K27me3 and low-methylated H3K4 enriched loci, including AGO5, via the phosphorylation state-dependent inhibition of Pol II release from the transcriptional start site (e.g. Ser5P-Pol II dephosphorylation). The BPC complex represses flowering by inhibiting the expression of several genes, including AGL6, FT, FUL and SOC1. The polypeptide is Protein PARALOG OF AIPP2 (Arabidopsis thaliana (Mouse-ear cress)).